A 410-amino-acid chain; its full sequence is TNF receptor-associated factor family protein DDB_G0279745 (410 aa).

Residues 27–67 (CVICSFPLFDGLQCKRGHGACKSCWEKIIGENGKKECHSCR) form an RING-type; degenerate zinc finger. 2 TRAF-type zinc fingers span residues 81–154 (YLEK…SLEQ) and 154–213 (QHQN…DESI). A coiled-coil region spans residues 216 to 284 (LSNSIVEIQK…SMINKLDDSA (69 aa)).

Belongs to the TNF receptor-associated factor family.

It is found in the cytoplasm. Its function is as follows. Probable adapter protein and signal transducer that links members of the tumor necrosis factor receptor family to different signaling pathways by association with the receptor cytoplasmic domain and kinases. The protein is TNF receptor-associated factor family protein DDB_G0279745 of Dictyostelium discoideum (Social amoeba).